The sequence spans 69 residues: Protein transport protein Sec61 subunit gamma (69 aa).

The Cytoplasmic portion of the chain corresponds to 1-40; it reads MDILEETAAPLKDFAKNSIRLFKKCTKPDAQEFQKIALAT. The chain crosses the membrane as a helical span at residues 41–61; it reads LIGFAIMGFIGFFVKLIHIPI. The Extracellular portion of the chain corresponds to 62 to 69; sequence NNILVGGV.

The protein belongs to the SecE/SEC61-gamma family. As to quaternary structure, heterotrimeric complex composed of SEC61-alpha, SEC61-beta and SEC61-gamma.

Its subcellular location is the endoplasmic reticulum membrane. Functionally, necessary for protein translocation in the endoplasmic reticulum. The polypeptide is Protein transport protein Sec61 subunit gamma (sec61g) (Dictyostelium discoideum (Social amoeba)).